Consider the following 454-residue polypeptide: Chromosomal replication initiator protein DnaA (454 aa).

The tract at residues 1 to 79 is domain I, interacts with DnaA modulators; that stretch reads MSLCLWKQCL…NSPLIKFEIY (79 aa). The segment at 79 to 117 is domain II; the sequence is YQIYKENKLKKNIENNNNNKNEKLIWSNIPKFKNLSYRS. Positions 118-334 are domain III, AAA+ region; the sequence is NINKRYNFQN…GALNRVILNS (217 aa). Positions 162, 164, 165, and 166 each coordinate ATP. A domain IV, binds dsDNA region spans residues 335–454; it reads RFTHRAITVD…FLNLIRTLSK (120 aa).

It belongs to the DnaA family. As to quaternary structure, oligomerizes as a right-handed, spiral filament on DNA at oriC.

Its subcellular location is the cytoplasm. In terms of biological role, plays an essential role in the initiation and regulation of chromosomal replication. ATP-DnaA binds to the origin of replication (oriC) to initiate formation of the DNA replication initiation complex once per cell cycle. Binds the DnaA box (a 9 base pair repeat at the origin) and separates the double-stranded (ds)DNA. Forms a right-handed helical filament on oriC DNA; dsDNA binds to the exterior of the filament while single-stranded (ss)DNA is stabiized in the filament's interior. The ATP-DnaA-oriC complex binds and stabilizes one strand of the AT-rich DNA unwinding element (DUE), permitting loading of DNA polymerase. After initiation quickly degrades to an ADP-DnaA complex that is not apt for DNA replication. Binds acidic phospholipids. The protein is Chromosomal replication initiator protein DnaA of Buchnera aphidicola subsp. Acyrthosiphon pisum (strain 5A).